A 158-amino-acid polypeptide reads, in one-letter code: NAD(P)H-quinone oxidoreductase subunit J, chloroplastic (158 aa).

The protein belongs to the complex I 30 kDa subunit family. As to quaternary structure, NDH is composed of at least 16 different subunits, 5 of which are encoded in the nucleus.

The protein localises to the plastid. Its subcellular location is the chloroplast thylakoid membrane. The catalysed reaction is a plastoquinone + NADH + (n+1) H(+)(in) = a plastoquinol + NAD(+) + n H(+)(out). The enzyme catalyses a plastoquinone + NADPH + (n+1) H(+)(in) = a plastoquinol + NADP(+) + n H(+)(out). NDH shuttles electrons from NAD(P)H:plastoquinone, via FMN and iron-sulfur (Fe-S) centers, to quinones in the photosynthetic chain and possibly in a chloroplast respiratory chain. The immediate electron acceptor for the enzyme in this species is believed to be plastoquinone. Couples the redox reaction to proton translocation, and thus conserves the redox energy in a proton gradient. This is NAD(P)H-quinone oxidoreductase subunit J, chloroplastic from Cucumis sativus (Cucumber).